Reading from the N-terminus, the 1029-residue chain is FYVE, RhoGEF and PH domain-containing protein tag-77 (1029 aa).

Composition is skewed to basic and acidic residues over residues methionine 1–aspartate 12 and threonine 20–phenylalanine 39. Disordered stretches follow at residues methionine 1–glutamate 155, valine 185–threonine 254, and asparagine 279–aspartate 370. Over residues glutamine 42 to proline 56 the composition is skewed to pro residues. Composition is skewed to low complexity over residues proline 76–asparagine 85 and serine 122–serine 133. Polar residues-rich tracts occupy residues serine 141–glutamate 155 and proline 200–serine 211. The span at aspartate 212–methionine 227 shows a compositional bias: acidic residues. Residues serine 316–serine 334 show a composition bias toward low complexity. Residues methionine 335–serine 347 show a composition bias toward polar residues. A DH domain is found at lysine 375 to lysine 572. In terms of domain architecture, PH spans asparagine 593–tyrosine 696. Zn(2+) is bound by residues cysteine 810, cysteine 823, cysteine 826, cysteine 831, cysteine 834, cysteine 851, and cysteine 854. The FYVE-type; degenerate zinc-finger motif lies at cysteine 810–tyrosine 859.

Its subcellular location is the cytoplasm. The protein localises to the cytoskeleton. Its function is as follows. Activates cdc-42, a member of the Ras-like family of Rho- and Rac proteins, by exchanging bound GDP for free GTP. May play a role in regulating the actin cytoskeleton and cell shape. Required for normal lifespan. This Caenorhabditis elegans protein is FYVE, RhoGEF and PH domain-containing protein tag-77.